The sequence spans 185 residues: C-phycoerythrin beta chain (185 aa).

(2R,3E)-phycoerythrobilin contacts are provided by Cys49 and Cys60. The residue at position 71 (Asn71) is an N4-methylasparagine. Residues Cys81 and Cys166 each coordinate (2R,3E)-phycoerythrobilin.

Belongs to the phycobiliprotein family. In terms of assembly, heterodimer of an alpha and a beta chain. Contains three covalently linked bilin chromophores.

The protein localises to the cellular thylakoid membrane. Functionally, light-harvesting photosynthetic bile pigment-protein from the phycobiliprotein complex. The sequence is that of C-phycoerythrin beta chain (cpeB) from Pseudanabaena tenuis (strain PCC 7409).